A 259-amino-acid polypeptide reads, in one-letter code: 3'-5' ssDNA/RNA exonuclease TatD (259 aa).

A divalent metal cation contacts are provided by Glu-92, His-128, and His-153.

It belongs to the metallo-dependent hydrolases superfamily. TatD-type hydrolase family. TatD subfamily. As to quaternary structure, monomer. Mg(2+) serves as cofactor.

Its subcellular location is the cytoplasm. Its function is as follows. 3'-5' exonuclease that prefers single-stranded DNA and RNA. May play a role in the H(2)O(2)-induced DNA damage repair. The chain is 3'-5' ssDNA/RNA exonuclease TatD from Erwinia tasmaniensis (strain DSM 17950 / CFBP 7177 / CIP 109463 / NCPPB 4357 / Et1/99).